Reading from the N-terminus, the 191-residue chain is Peptidyl-tRNA hydrolase (191 aa).

Y17 serves as a coordination point for tRNA. H22 serves as the catalytic Proton acceptor. TRNA is bound by residues Y68, N70, and N116.

Belongs to the PTH family. As to quaternary structure, monomer.

The protein resides in the cytoplasm. The catalysed reaction is an N-acyl-L-alpha-aminoacyl-tRNA + H2O = an N-acyl-L-amino acid + a tRNA + H(+). Its function is as follows. Hydrolyzes ribosome-free peptidyl-tRNAs (with 1 or more amino acids incorporated), which drop off the ribosome during protein synthesis, or as a result of ribosome stalling. Functionally, catalyzes the release of premature peptidyl moieties from peptidyl-tRNA molecules trapped in stalled 50S ribosomal subunits, and thus maintains levels of free tRNAs and 50S ribosomes. The protein is Peptidyl-tRNA hydrolase of Francisella tularensis subsp. holarctica (strain FTNF002-00 / FTA).